The chain runs to 229 residues: UPF0488 protein C8orf33 homolog (229 aa).

Ala-2 bears the N-acetylalanine mark. Arg-27 carries the omega-N-methylarginine modification. Residues 55-101 (SRAHPLGDEGGTASKKQNKKKKTRNRASVANGGEKASEKLAPEEVPL) are disordered. Over residues 70 to 79 (KQNKKKKTRN) the composition is skewed to basic residues. Position 82 is a phosphoserine (Ser-82).

The protein belongs to the UPF0488 family.

This chain is UPF0488 protein C8orf33 homolog, found in Pongo abelii (Sumatran orangutan).